The primary structure comprises 150 residues: Transcription antitermination protein NusB (150 aa).

This sequence belongs to the NusB family.

Involved in transcription antitermination. Required for transcription of ribosomal RNA (rRNA) genes. Binds specifically to the boxA antiterminator sequence of the ribosomal RNA (rrn) operons. The sequence is that of Transcription antitermination protein NusB from Streptococcus pyogenes serotype M1.